The following is a 223-amino-acid chain: Adenylate kinase (223 aa).

ATP is bound at residue 10-15; that stretch reads GSGKGT. Residues 30 to 59 form an NMP region; the sequence is ESGAIFREHIGGGTELGMKAKGYIDKGELV. AMP is bound by residues serine 31, arginine 36, 57–59, 84–87, and glutamine 91; these read ELV and GFPR. The segment at 125–164 is LID; sequence GRRLCANDPNHPNNIFIDAIKPNGDKCRVCGGDLKTRSDD. Arginine 126 serves as a coordination point for ATP. AMP contacts are provided by arginine 161 and arginine 173. Residue glycine 209 participates in ATP binding.

It belongs to the adenylate kinase family. As to quaternary structure, monomer.

It is found in the cytoplasm. It carries out the reaction AMP + ATP = 2 ADP. Its pathway is purine metabolism; AMP biosynthesis via salvage pathway; AMP from ADP: step 1/1. Functionally, catalyzes the reversible transfer of the terminal phosphate group between ATP and AMP. Plays an important role in cellular energy homeostasis and in adenine nucleotide metabolism. This is Adenylate kinase from Solidesulfovibrio magneticus (strain ATCC 700980 / DSM 13731 / RS-1) (Desulfovibrio magneticus).